Reading from the N-terminus, the 424-residue chain is MAKIVVTGGQALQGEVNISGAKNAVLPILCATLLADAPVQISNVPHLHDVITMVKLLSELGAEVTIDEGTLAKGRSILVDPRSVTHQIAPYELVKTMRASILVLGPLLARYGTAEVSLPGGCAIGSRPVDQHIKGLQALGAEISVENGYIKATSHGRLKGGRYVFDMVSVTGTENVLMAAVLAEGTTVLENAAMEPEVTDLADCMIALGAQIEGAGTPRIVVQGVQRLGGGHHAVLPDRIETGTFLVAAAMTGGSVTVRRARPETLDAMLDKLTEAGATITTTADSITLDMQGKRPRAVSLTTAPYPAFPTDMQAQFMALNCVADGVGVINETIFENRFMHVNELLRLGADIQVEGHTAIVRGAARLSGAPVMATDLRASASLILAGLVADGDTTIDRIYHLDRGYENIEEKLGALGATIQRTA.

22-23 (KN) serves as a coordination point for phosphoenolpyruvate. UDP-N-acetyl-alpha-D-glucosamine is bound at residue arginine 98. The active-site Proton donor is the cysteine 122. 2-(S-cysteinyl)pyruvic acid O-phosphothioketal is present on cysteine 122. Residues 127-131 (RPVDQ), aspartate 312, and isoleucine 334 contribute to the UDP-N-acetyl-alpha-D-glucosamine site.

The protein belongs to the EPSP synthase family. MurA subfamily.

It localises to the cytoplasm. The enzyme catalyses phosphoenolpyruvate + UDP-N-acetyl-alpha-D-glucosamine = UDP-N-acetyl-3-O-(1-carboxyvinyl)-alpha-D-glucosamine + phosphate. The protein operates within cell wall biogenesis; peptidoglycan biosynthesis. Its function is as follows. Cell wall formation. Adds enolpyruvyl to UDP-N-acetylglucosamine. The sequence is that of UDP-N-acetylglucosamine 1-carboxyvinyltransferase from Xanthomonas oryzae pv. oryzae (strain MAFF 311018).